A 237-amino-acid chain; its full sequence is Protein VP5 (237 aa).

Residues 1–148 (MLSIIRRKTR…TKQRCKANLR (148 aa)) are Cytoplasmic-facing. The tract at residues 84–237 (SSSKDPDISG…SKLGKSRDIC (154 aa)) is disordered. Composition is skewed to basic and acidic residues over residues 85–97 (SSKDPDISGQKDK) and 116–130 (SRVREHEPIHEHEPI). Residues 149-165 (GDSGFVSIGRSNHPKLS) traverse the membrane as a helical segment. The Extracellular portion of the chain corresponds to 166 to 237 (REDCHNTRVP…SKLGKSRDIC (72 aa)). Basic residues predominate over residues 214–231 (RSHRRKKAKTRTKTSKLG).

Its subcellular location is the host membrane. The protein is Protein VP5 (VP5) of Drosophila x virus (isolate Chung/1996) (DXV).